The primary structure comprises 117 residues: Acidic phospholipase A2 PA-1G (117 aa).

Cystine bridges form between Cys11/Cys71, Cys27/Cys117, Cys29/Cys45, Cys44/Cys98, Cys51/Cys91, Cys60/Cys84, and Cys78/Cys89. Residues Tyr28, Gly30, and Gly32 each contribute to the Ca(2+) site. The active site involves His48. Asp49 contacts Ca(2+). The active site involves Asp92.

Belongs to the phospholipase A2 family. Group I subfamily. D49 sub-subfamily. Requires Ca(2+) as cofactor. In terms of tissue distribution, expressed by the venom gland.

Its subcellular location is the secreted. The catalysed reaction is a 1,2-diacyl-sn-glycero-3-phosphocholine + H2O = a 1-acyl-sn-glycero-3-phosphocholine + a fatty acid + H(+). In terms of biological role, PLA2 catalyzes the calcium-dependent hydrolysis of the 2-acyl groups in 3-sn-phosphoglycerides. The chain is Acidic phospholipase A2 PA-1G from Pseudechis australis (Mulga snake).